Consider the following 224-residue polypeptide: Ribonuclease T (224 aa).

Positions 32–206 constitute an Exonuclease domain; that stretch reads VVVDVETGGF…YDTEKTAELF (175 aa). 4 residues coordinate Mg(2+): D35, E37, H193, and D198. H193 (proton donor/acceptor) is an active-site residue.

The protein belongs to the RNase T family. As to quaternary structure, homodimer. The cofactor is Mg(2+).

Trims short 3' overhangs of a variety of RNA species, leaving a one or two nucleotide 3' overhang. Responsible for the end-turnover of tRNA: specifically removes the terminal AMP residue from uncharged tRNA (tRNA-C-C-A). Also appears to be involved in tRNA biosynthesis. The chain is Ribonuclease T from Pseudomonas paraeruginosa (strain DSM 24068 / PA7) (Pseudomonas aeruginosa (strain PA7)).